We begin with the raw amino-acid sequence, 478 residues long: Violaxanthin de-epoxidase, chloroplastic (478 aa).

The stretch at 388–453 (LVERLEKKVE…RELSKEEMDV (66 aa)) forms a coiled coil.

Belongs to the calycin superfamily. Lipocalin family.

It is found in the plastid. The protein localises to the chloroplast thylakoid membrane. It catalyses the reaction all-trans-violaxanthin + 2 L-ascorbate = all-trans-zeaxanthin + 2 L-dehydroascorbate + 2 H2O. In terms of biological role, part of the xanthophyll (or violaxanthin) cycle for controlling the concentration of zeaxanthin in chloroplasts. Catalyzes the two-step mono de-epoxidation reaction. Stereospecific for all-trans xanthophylls. Zeaxanthin induces the dissipation of excitation energy in the chlorophyll of the light-harvesting protein complex of photosystem II. The sequence is that of Violaxanthin de-epoxidase, chloroplastic (VDE1) from Nicotiana tabacum (Common tobacco).